The following is a 192-amino-acid chain: Adenylate kinase (192 aa).

10–18 (GVPGVGGTT) is a binding site for ATP.

It belongs to the archaeal adenylate kinase family. As to quaternary structure, monomer.

Its subcellular location is the cytoplasm. The enzyme catalyses AMP + ATP = 2 ADP. The polypeptide is Adenylate kinase (Methanococcus maripaludis (strain C7 / ATCC BAA-1331)).